The chain runs to 361 residues: Protein Csal_2339 (361 aa).

The active-site Proton acceptor is the S91. Residues 92–93 (GS) and 259–260 (GT) contribute to the substrate site.

It belongs to the proline racemase family.

The enzyme catalyses trans-4-hydroxy-L-proline = cis-4-hydroxy-D-proline. In vitro, catalyzes the epimerization of trans-4-hydroxy-L-proline (t4LHyp) to cis-4-hydroxy-D-proline (c4DHyp), albeit with very low efficiency. The physiological substrate may be different. Displays neither proline racemase activity nor t3LHyp dehydratase activity. This chain is Protein Csal_2339, found in Chromohalobacter salexigens (strain ATCC BAA-138 / DSM 3043 / CIP 106854 / NCIMB 13768 / 1H11).